Reading from the N-terminus, the 273-residue chain is tRNA pseudouridine synthase B (273 aa).

The active-site Nucleophile is aspartate 38.

This sequence belongs to the pseudouridine synthase TruB family. Type 1 subfamily.

The catalysed reaction is uridine(55) in tRNA = pseudouridine(55) in tRNA. In terms of biological role, responsible for synthesis of pseudouridine from uracil-55 in the psi GC loop of transfer RNAs. The polypeptide is tRNA pseudouridine synthase B (Campylobacter curvus (strain 525.92)).